Reading from the N-terminus, the 328-residue chain is Phosphate acyltransferase (328 aa).

It belongs to the PlsX family. In terms of assembly, homodimer. Probably interacts with PlsY.

Its subcellular location is the cytoplasm. The catalysed reaction is a fatty acyl-[ACP] + phosphate = an acyl phosphate + holo-[ACP]. Its pathway is lipid metabolism; phospholipid metabolism. Functionally, catalyzes the reversible formation of acyl-phosphate (acyl-PO(4)) from acyl-[acyl-carrier-protein] (acyl-ACP). This enzyme utilizes acyl-ACP as fatty acyl donor, but not acyl-CoA. This chain is Phosphate acyltransferase, found in Mycoplasmoides gallisepticum (strain R(low / passage 15 / clone 2)) (Mycoplasma gallisepticum).